The following is a 157-amino-acid chain: Cyclic pyranopterin monophosphate synthase (157 aa).

Substrate contacts are provided by residues 74–76 (MCH) and 111–112 (ME). Asp-126 is an active-site residue.

Belongs to the MoaC family. As to quaternary structure, homohexamer; trimer of dimers.

The enzyme catalyses (8S)-3',8-cyclo-7,8-dihydroguanosine 5'-triphosphate = cyclic pyranopterin phosphate + diphosphate. Its pathway is cofactor biosynthesis; molybdopterin biosynthesis. Its function is as follows. Catalyzes the conversion of (8S)-3',8-cyclo-7,8-dihydroguanosine 5'-triphosphate to cyclic pyranopterin monophosphate (cPMP). The polypeptide is Cyclic pyranopterin monophosphate synthase (Carboxydothermus hydrogenoformans (strain ATCC BAA-161 / DSM 6008 / Z-2901)).